The primary structure comprises 437 residues: O-methyltransferase 10 (437 aa).

S-adenosyl-L-methionine is bound by residues Gly259, Glu282, Asn315, and Met316. His335 acts as the Proton acceptor in catalysis.

It belongs to the class I-like SAM-binding methyltransferase superfamily. Cation-independent O-methyltransferase family. COMT subfamily.

The catalysed reaction is (3,5-dichloro-2,4,6-trihydroxyphenyl)hexan-1-one + S-adenosyl-L-methionine = 1-(3,5-dichloro-2,6-dihydroxy-4-methoxyphenyl)hexan-1-one + S-adenosyl-L-homocysteine + H(+). This is O-methyltransferase 10 (omt10) from Dictyostelium discoideum (Social amoeba).